The primary structure comprises 175 residues: Nucleoside triphosphate/diphosphate phosphatase (175 aa).

R23 acts as the Proton donor in catalysis. N87, D103, D105, D107, D120, and E123 together coordinate Mg(2+).

It belongs to the Ntdp family. Mg(2+) is required as a cofactor.

The catalysed reaction is a ribonucleoside 5'-triphosphate + H2O = a ribonucleoside 5'-diphosphate + phosphate + H(+). It catalyses the reaction a ribonucleoside 5'-diphosphate + H2O = a ribonucleoside 5'-phosphate + phosphate + H(+). Functionally, has nucleoside phosphatase activity towards nucleoside triphosphates and nucleoside diphosphates. The chain is Nucleoside triphosphate/diphosphate phosphatase from Listeria monocytogenes serotype 4b (strain CLIP80459).